Consider the following 408-residue polypeptide: LL-diaminopimelate aminotransferase (408 aa).

Residues Y15 and G42 each contribute to the substrate site. Pyridoxal 5'-phosphate-binding positions include Y72, 108–109, Y132, N187, Y218, and 246–248; these read SK and SFS. Residues K109, Y132, and N187 each contribute to the substrate site. At K249 the chain carries N6-(pyridoxal phosphate)lysine. Positions 257 and 292 each coordinate pyridoxal 5'-phosphate. Residues N292 and R388 each contribute to the substrate site.

This sequence belongs to the class-I pyridoxal-phosphate-dependent aminotransferase family. LL-diaminopimelate aminotransferase subfamily. As to quaternary structure, homodimer. The cofactor is pyridoxal 5'-phosphate.

It catalyses the reaction (2S,6S)-2,6-diaminopimelate + 2-oxoglutarate = (S)-2,3,4,5-tetrahydrodipicolinate + L-glutamate + H2O + H(+). It functions in the pathway amino-acid biosynthesis; L-lysine biosynthesis via DAP pathway; LL-2,6-diaminopimelate from (S)-tetrahydrodipicolinate (aminotransferase route): step 1/1. Involved in the synthesis of meso-diaminopimelate (m-DAP or DL-DAP), required for both lysine and peptidoglycan biosynthesis. Catalyzes the direct conversion of tetrahydrodipicolinate to LL-diaminopimelate. The chain is LL-diaminopimelate aminotransferase from Synechococcus sp. (strain WH7803).